We begin with the raw amino-acid sequence, 736 residues long: Myotubularin-related protein 12 (736 aa).

Positions 182–558 (YLRSTNPEML…RQLSLPSSAF (377 aa)) constitute a Myotubularin phosphatase domain. The tract at residues 672-691 (SLATQPDHPPPLHHRLPSFG) is disordered.

Belongs to the protein-tyrosine phosphatase family. Non-receptor class myotubularin subfamily. As to quaternary structure, heterodimer with lipid phosphatase mtm1. In skeletal muscles, the interaction stabilizes both mtmr12 and mtm1 protein levels.

It localises to the cytoplasm. The protein resides in the sarcoplasmic reticulum. Its subcellular location is the myofibril. The protein localises to the sarcomere. Acts as an adapter for the myotubularin phosphatase mtm1 to regulate mtm1 protein stability and possibly its intracellular location. By stabilizing mtm1 protein levels, required for skeletal muscle maintenance but not for myogenesis. In skeletal muscle cells, does not regulate mtm1 subcellular localization. This Danio rerio (Zebrafish) protein is Myotubularin-related protein 12 (mtmr12).